Consider the following 995-residue polypeptide: UPF0182 protein MUL_2505 (995 aa).

A run of 7 helical transmembrane segments spans residues 18–38 (VLIL…RLID), 63–83 (FLVF…GLAL), 113–133 (LFGI…AQSY), 175–195 (FVAI…FGGI), 210–230 (IQLV…YWLN), 259–279 (KLIL…AIVL), and 287–307 (IGLV…PMIV). The interval 900-947 (AATGIQPTEGGAPANVPPNNAPSPEALPGTPPSPPTAVPPAPEASVTL) is disordered. Residues 928–941 (GTPPSPPTAVPPAP) are compositionally biased toward pro residues.

The protein belongs to the UPF0182 family.

Its subcellular location is the cell membrane. This chain is UPF0182 protein MUL_2505, found in Mycobacterium ulcerans (strain Agy99).